The sequence spans 387 residues: Anhydro-N-acetylmuramic acid kinase (387 aa).

Position 17–24 (17–24 (GTSMDGVD)) interacts with ATP.

This sequence belongs to the anhydro-N-acetylmuramic acid kinase family.

The catalysed reaction is 1,6-anhydro-N-acetyl-beta-muramate + ATP + H2O = N-acetyl-D-muramate 6-phosphate + ADP + H(+). It functions in the pathway amino-sugar metabolism; 1,6-anhydro-N-acetylmuramate degradation. It participates in cell wall biogenesis; peptidoglycan recycling. Catalyzes the specific phosphorylation of 1,6-anhydro-N-acetylmuramic acid (anhMurNAc) with the simultaneous cleavage of the 1,6-anhydro ring, generating MurNAc-6-P. Is required for the utilization of anhMurNAc either imported from the medium or derived from its own cell wall murein, and thus plays a role in cell wall recycling. The chain is Anhydro-N-acetylmuramic acid kinase from Burkholderia pseudomallei (strain 1710b).